The sequence spans 193 residues: Ion-translocating oxidoreductase complex subunit A (193 aa).

The next 6 membrane-spanning stretches (helical) occupy residues 5-25 (LLLF…FLGL), 39-59 (MGMG…AWLI), 63-83 (ILIP…VIAV), 102-122 (LLGI…VALL), 134-154 (ALYG…FTAI), and 171-191 (AIAL…SGLV).

The protein belongs to the NqrDE/RnfAE family. The complex is composed of six subunits: RsxA, RsxB, RsxC, RsxD, RsxE and RsxG.

The protein localises to the cell inner membrane. Part of a membrane-bound complex that couples electron transfer with translocation of ions across the membrane. Required to maintain the reduced state of SoxR. This chain is Ion-translocating oxidoreductase complex subunit A, found in Shigella boydii serotype 4 (strain Sb227).